Consider the following 71-residue polypeptide: DNA gyrase inhibitor YacG (71 aa).

Zn(2+) is bound by residues Cys-9, Cys-12, Cys-28, and Cys-32. The tract at residues 43-71 is disordered; the sequence is EEKRIPSQSESNDSDEWSEMPEQDPKPFN. The span at 54-64 shows a compositional bias: acidic residues; that stretch reads NDSDEWSEMPE.

Belongs to the DNA gyrase inhibitor YacG family. As to quaternary structure, interacts with GyrB. The cofactor is Zn(2+).

Inhibits all the catalytic activities of DNA gyrase by preventing its interaction with DNA. Acts by binding directly to the C-terminal domain of GyrB, which probably disrupts DNA binding by the gyrase. This chain is DNA gyrase inhibitor YacG, found in Proteus mirabilis (strain HI4320).